The following is a 294-amino-acid chain: Lipoprotein NlpI (294 aa).

Residues 1 to 18 form the signal peptide; it reads MKPFLRWCFVATALTLAG. Cys-19 is lipidated: N-palmitoyl cysteine. Cys-19 carries the S-diacylglycerol cysteine lipid modification. TPR repeat units follow at residues 62-95, 96-129, and 234-267; these read AQLL…RPDM, PEVF…DPTY, and SETN…NVHN.

Homodimer.

It is found in the cell membrane. May be involved in cell division. May play a role in bacterial septation or regulation of cell wall degradation during cell division. This Escherichia coli O157:H7 protein is Lipoprotein NlpI (nlpI).